A 205-amino-acid chain; its full sequence is Thymidylate kinase (205 aa).

9 to 16 is an ATP binding site; sequence GPEGSGKT.

It belongs to the thymidylate kinase family.

The enzyme catalyses dTMP + ATP = dTDP + ADP. Functionally, phosphorylation of dTMP to form dTDP in both de novo and salvage pathways of dTTP synthesis. The sequence is that of Thymidylate kinase from Staphylococcus aureus (strain NCTC 8325 / PS 47).